Reading from the N-terminus, the 1043-residue chain is NACHT, LRR and PYD domains-containing protein 13 (1043 aa).

A Pyrin domain is found at 1-107; that stretch reads MNFSVITCPN…CEKVRAEMKE (107 aa). The region spanning 229 to 558 is the NACHT domain; that stretch reads QTIVLVGRAG…VLEEPREFPP (330 aa). 235-242 contacts ATP; sequence GRAGVGKT. LRR repeat units lie at residues 725-749, 781-804, 837-864, 894-917, 923-946, 951-978, and 1007-1030; these read NENL…LCLA, NSKL…ILKA, IQHV…ALTH, NRSL…FLCE, DGNL…ELAN, NHNV…ALKP, and SKSL…MLCK.

The protein belongs to the NLRP family.

Functionally, involved in inflammation. This chain is NACHT, LRR and PYD domains-containing protein 13 (NLRP13), found in Homo sapiens (Human).